Here is a 335-residue protein sequence, read N- to C-terminus: Beta-ketoacyl-[acyl-carrier-protein] synthase III (335 aa).

Residues Cys119 and His261 contribute to the active site. The ACP-binding stretch occupies residues 262–266 (QANQR). Asn291 is an active-site residue.

It belongs to the thiolase-like superfamily. FabH family. As to quaternary structure, homodimer.

The protein resides in the cytoplasm. The enzyme catalyses malonyl-[ACP] + acetyl-CoA + H(+) = 3-oxobutanoyl-[ACP] + CO2 + CoA. It participates in lipid metabolism; fatty acid biosynthesis. Catalyzes the condensation reaction of fatty acid synthesis by the addition to an acyl acceptor of two carbons from malonyl-ACP. Catalyzes the first condensation reaction which initiates fatty acid synthesis and may therefore play a role in governing the total rate of fatty acid production. Possesses both acetoacetyl-ACP synthase and acetyl transacylase activities. Its substrate specificity determines the biosynthesis of branched-chain and/or straight-chain of fatty acids. In Prochlorococcus marinus subsp. pastoris (strain CCMP1986 / NIES-2087 / MED4), this protein is Beta-ketoacyl-[acyl-carrier-protein] synthase III.